Here is a 242-residue protein sequence, read N- to C-terminus: Probable porphobilinogen deaminase (242 aa).

Belongs to the HMBS family.

It catalyses the reaction 4 porphobilinogen + H2O = hydroxymethylbilane + 4 NH4(+). It participates in porphyrin-containing compound metabolism; protoporphyrin-IX biosynthesis; coproporphyrinogen-III from 5-aminolevulinate: step 2/4. Functionally, tetrapolymerization of the monopyrrole PBG into the hydroxymethylbilane pre-uroporphyrinogen in several discrete steps. The polypeptide is Probable porphobilinogen deaminase (hemC) (Chlamydia muridarum (strain MoPn / Nigg)).